The sequence spans 505 residues: Membrane-bound O-acyltransferase GUP1 (505 aa).

Residues 1 to 217 (MFKAAMDASN…VAPIPLTDYN (217 aa)) are Extracellular-facing. Residues 218–238 (FVNYMAYITYAPLFIAGPIIT) form a helical membrane-spanning segment. Residues 239–266 (FNDYIYQSDYKAMSSVKDYKRTFIYFLR) lie on the Cytoplasmic side of the membrane. A helical membrane pass occupies residues 267-287 (FAFCILVMEFLLHFMYVVAVS). The Extracellular segment spans residues 288 to 296 (KTKAWEGDT). Residues 297-317 (PFQLSMLGLFNLNIIWLKLLI) traverse the membrane as a helical segment. At 318–377 (PWRLFRLWSLIDGIDPPENMIRCMDNNFSTLAFWRAWHRSYNRWIIRYIYIPLGGGGKYR) the chain is on the cytoplasmic side. 2 helical membrane-spanning segments follow: residues 378 to 398 (ILNS…ELKL) and 399 to 419 (LMWG…TAIF). His-392 is an active-site residue. Over 420–430 (KNYQHEPWYRH) the chain is Cytoplasmic. A helical transmembrane segment spans residues 431–451 (VCALGAVINIWMMMLANLFGF). Residues 452-464 (CMGKDGTMSLIKT) lie on the Extracellular side of the membrane. A helical transmembrane segment spans residues 465–485 (LFTTAVGLRFLFLSLGALFVG). Over 486–505 (SQVMFELREAEKRRGVNVKC) the chain is Cytoplasmic.

This sequence belongs to the membrane-bound acyltransferase family.

It localises to the cell membrane. The protein resides in the endoplasmic reticulum membrane. It is found in the mitochondrion membrane. Functionally, membrane-bound O-acyltransferase involved in the remodeling of glycosylphosphatidylinositol (GPI) anchors. Acts only on GPI-anchored proteins, but not on free GPI lipids. Also involved in lipid metabolism, having profound effects on sphingolipid-sterol-ordered domains integrity and assembly. Involved in cell integrity and apoptosis. The polypeptide is Membrane-bound O-acyltransferase GUP1 (GUP1) (Millerozyma farinosa (Yeast)).